The following is a 403-amino-acid chain: S-adenosylmethionine synthase (403 aa).

Residue H17 coordinates ATP. D19 lines the Mg(2+) pocket. E45 contributes to the K(+) binding site. Residues E58 and Q104 each contribute to the L-methionine site. Residues Q104–T114 are flexible loop. Residues D179 to K181, K250 to F251, D259, R265 to K266, A282, and K286 each bind ATP. D259 is a binding site for L-methionine. K290 serves as a coordination point for L-methionine.

Belongs to the AdoMet synthase family. As to quaternary structure, homotetramer; dimer of dimers. Mg(2+) serves as cofactor. K(+) is required as a cofactor.

It is found in the cytoplasm. The enzyme catalyses L-methionine + ATP + H2O = S-adenosyl-L-methionine + phosphate + diphosphate. It functions in the pathway amino-acid biosynthesis; S-adenosyl-L-methionine biosynthesis; S-adenosyl-L-methionine from L-methionine: step 1/1. In terms of biological role, catalyzes the formation of S-adenosylmethionine (AdoMet) from methionine and ATP. The overall synthetic reaction is composed of two sequential steps, AdoMet formation and the subsequent tripolyphosphate hydrolysis which occurs prior to release of AdoMet from the enzyme. This is S-adenosylmethionine synthase from Mycobacterium avium (strain 104).